The primary structure comprises 189 residues: Peptidyl-tRNA hydrolase (189 aa).

Tyrosine 15 contacts tRNA. Histidine 20 serves as the catalytic Proton acceptor. TRNA-binding residues include phenylalanine 66, asparagine 68, and asparagine 114.

It belongs to the PTH family. As to quaternary structure, monomer.

The protein resides in the cytoplasm. The enzyme catalyses an N-acyl-L-alpha-aminoacyl-tRNA + H2O = an N-acyl-L-amino acid + a tRNA + H(+). Functionally, hydrolyzes ribosome-free peptidyl-tRNAs (with 1 or more amino acids incorporated), which drop off the ribosome during protein synthesis, or as a result of ribosome stalling. Catalyzes the release of premature peptidyl moieties from peptidyl-tRNA molecules trapped in stalled 50S ribosomal subunits, and thus maintains levels of free tRNAs and 50S ribosomes. The polypeptide is Peptidyl-tRNA hydrolase (Streptococcus equi subsp. zooepidemicus (strain H70)).